Consider the following 207-residue polypeptide: Uracil phosphoribosyltransferase (207 aa).

Residues arginine 77, arginine 102, and 129-137 each bind 5-phospho-alpha-D-ribose 1-diphosphate; that span reads DPMVATGGS. Residues isoleucine 192 and 197–199 contribute to the uracil site; that span reads GDA. A 5-phospho-alpha-D-ribose 1-diphosphate-binding site is contributed by aspartate 198.

Belongs to the UPRTase family. Requires Mg(2+) as cofactor.

It carries out the reaction UMP + diphosphate = 5-phospho-alpha-D-ribose 1-diphosphate + uracil. Its pathway is pyrimidine metabolism; UMP biosynthesis via salvage pathway; UMP from uracil: step 1/1. Its activity is regulated as follows. Allosterically activated by GTP. In terms of biological role, catalyzes the conversion of uracil and 5-phospho-alpha-D-ribose 1-diphosphate (PRPP) to UMP and diphosphate. In Mycobacterium bovis (strain ATCC BAA-935 / AF2122/97), this protein is Uracil phosphoribosyltransferase.